Here is a 311-residue protein sequence, read N- to C-terminus: Malate dehydrogenase (311 aa).

NAD(+) is bound by residues 7 to 13 (GAAGGIG) and D34. Positions 81 and 87 each coordinate substrate. Residues N94 and 117–119 (ITN) each bind NAD(+). The substrate site is built by N119 and R153. H177 serves as the catalytic Proton acceptor. M227 contributes to the NAD(+) binding site.

The protein belongs to the LDH/MDH superfamily. MDH type 1 family. As to quaternary structure, homodimer.

The enzyme catalyses (S)-malate + NAD(+) = oxaloacetate + NADH + H(+). Catalyzes the reversible oxidation of malate to oxaloacetate. This Colwellia psychrerythraea (strain 34H / ATCC BAA-681) (Vibrio psychroerythus) protein is Malate dehydrogenase.